Here is a 2208-residue protein sequence, read N- to C-terminus: RNA-directed RNA polymerase L (2208 aa).

Residues 26-284 form an endonuclease region; sequence KDALLSQVHP…LHQDSDTINC (259 aa). Mn(2+)-binding residues include Glu51, Asp89, and Glu102. Residue Lys115 is part of the active site. The 197-residue stretch at 1171–1367 folds into the RdRp catalytic domain; sequence CDMKMAVNNG…YLSSKLNKFV (197 aa). Asp1329 serves as a coordination point for Mg(2+).

This sequence belongs to the Bunyavirales RNA polymerase family. In terms of assembly, homomultimer; the oligomeric structure is essential for the polymerase activity. Interacts with nucleoprotein N. Interacts with protein Z; this interaction inhibits viral transcription and replication, Z partially blocks the product exit tunnel for the releasing nascent RNA product. The cofactor is Mn(2+). It depends on Mg(2+) as a cofactor.

It localises to the virion. The protein localises to the host cytoplasm. It carries out the reaction RNA(n) + a ribonucleoside 5'-triphosphate = RNA(n+1) + diphosphate. Functionally, RNA-dependent RNA polymerase, which is responsible for the replication and transcription of the viral RNA genome using antigenomic RNA as an intermediate. During transcription, synthesizes subgenomic RNAs and assures their capping by a cap-snatching mechanism, which involves the endonuclease activity cleaving the host capped pre-mRNAs. These short capped RNAs are then used as primers for viral transcription. The 3'-end of subgenomic mRNAs molecules are heterogeneous and not polyadenylated. The replicase function is to direct synthesis of antigenomic and genomic RNA which are encapsidated and non capped. As a consequence of the use of the same enzyme for both transcription and replication, these mechanisms need to be well coordinated. These processes may be regulated by proteins N and Z in a dose-dependent manner. Z protein inhibits the viral polymerase L und thus the viral transcription and RNA synthesis. The polypeptide is RNA-directed RNA polymerase L (Homo sapiens (Human)).